Here is a 270-residue protein sequence, read N- to C-terminus: Sulfur carrier protein FdhD (270 aa).

Cys116 functions as the Cysteine persulfide intermediate in the catalytic mechanism. Residue 253–258 coordinates Mo-bis(molybdopterin guanine dinucleotide); the sequence is FAREGK.

Belongs to the FdhD family.

The protein localises to the cytoplasm. In terms of biological role, required for formate dehydrogenase (FDH) activity. Acts as a sulfur carrier protein that transfers sulfur from IscS to the molybdenum cofactor prior to its insertion into FDH. The polypeptide is Sulfur carrier protein FdhD (Haemophilus influenzae (strain ATCC 51907 / DSM 11121 / KW20 / Rd)).